The sequence spans 255 residues: Ciliogenesis and planar polarity effector 2 (255 aa).

The tract at residues 52-255 is small GTPase-like; sequence PADIASYKLF…VIAGLVGGAD (204 aa). GTP-binding positions include 64-71 and 177-180; these read GRSGAGKT and TKLD.

The protein belongs to the small GTPase superfamily. Rab family.

It is found in the cytoplasm. Its subcellular location is the cytoskeleton. It localises to the cilium basal body. Functionally, potential effector of the planar cell polarity signaling pathway. Plays a role in targeted membrane trafficking most probably at the level of vesicle fusion with membranes. Involved in cilium biogenesis by regulating the transport of cargo proteins to the basal body and to the apical tips of cilia. More generally involved in exocytosis in secretory cells. The protein is Ciliogenesis and planar polarity effector 2 (cplane2) of Xenopus tropicalis (Western clawed frog).